Consider the following 586-residue polypeptide: Pescadillo homolog (586 aa).

The segment at 1–54 (MGGLEKKKYERGSATNYITRNKARKKLQLSLPDFRRLCILKGIYPHEPKHKKKV) is required for 28S ribosomal RNA processing. The segment at 1-257 (MGGLEKKKYE…PKIESQAQAE (257 aa)) is sufficient for nucleolar localization. Lys-98 is subject to N6-acetyllysine. Residues 305 to 414 (VTAQEEDRRK…LLLPVAEYFP (110 aa)) are sufficient for interaction with MAP1B. A BRCT domain is found at 321-414 (KHKKLFEGLK…LLLPVAEYFP (94 aa)). Positions 447–508 (GEDPGNLEEE…QQRLGGKKPQ (62 aa)) are disordered. The segment covering 451–491 (GNLEEEEEDEDDEGDDSEGDGDVAVENEEEVVEAESEEEEE) has biased composition (acidic residues). Lys-515 participates in a covalent cross-link: Glycyl lysine isopeptide (Lys-Gly) (interchain with G-Cter in SUMO1); alternate. A Glycyl lysine isopeptide (Lys-Gly) (interchain with G-Cter in SUMO2); alternate cross-link involves residue Lys-515. The segment at 537 to 586 (MMKKREKYLYQKIMFGKRRKIREANKLAEKRKAHDDAVRSEKKAKRTRPV) is required for 28S ribosomal RNA processing. Positions 562-577 (KLAEKRKAHDDAVRSE) are enriched in basic and acidic residues. Residues 562–586 (KLAEKRKAHDDAVRSEKKAKRTRPV) are disordered.

This sequence belongs to the pescadillo family. In terms of assembly, component of the PeBoW complex, composed of BOP1, PES1 and WDR12. The complex is held together by BOP1, which interacts with PES1 via its N-terminal domain and with WDR12 via a high-affinity interaction between the seven-bladed beta-propeller domains of the 2 proteins. The PeBoW complex associates with the 66S pre-ribosome. The PeBoW complex also associates with DDX27, PES1 interacts directly with DDX27. Interacts with IRS1 and UBTF. May interact with MAP1B. Sumoylated.

It is found in the nucleus. The protein resides in the nucleolus. Its subcellular location is the nucleoplasm. It localises to the chromosome. Its function is as follows. Component of the PeBoW complex, which is required for maturation of 28S and 5.8S ribosomal RNAs and formation of the 60S ribosome. This Rattus norvegicus (Rat) protein is Pescadillo homolog (Pes1).